The sequence spans 205 residues: Protein N-terminal glutamine amidohydrolase (205 aa).

Residues C20, H74, and D90 contribute to the active site.

This sequence belongs to the NTAQ1 family. As to quaternary structure, monomer.

The enzyme catalyses N-terminal L-glutaminyl-[protein] + H2O = N-terminal L-glutamyl-[protein] + NH4(+). Its function is as follows. Mediates the side-chain deamidation of N-terminal glutamine residues to glutamate, an important step in N-end rule pathway of protein degradation. Conversion of the resulting N-terminal glutamine to glutamate renders the protein susceptible to arginylation, polyubiquitination and degradation as specified by the N-end rule. Does not act on substrates with internal or C-terminal glutamine and does not act on non-glutamine residues in any position. In Drosophila ananassae (Fruit fly), this protein is Protein N-terminal glutamine amidohydrolase (tun).